The sequence spans 266 residues: Elongation factor Ts (266 aa).

Positions 80–83 (TDFV) are involved in Mg(2+) ion dislocation from EF-Tu.

The protein belongs to the EF-Ts family.

It is found in the cytoplasm. Associates with the EF-Tu.GDP complex and induces the exchange of GDP to GTP. It remains bound to the aminoacyl-tRNA.EF-Tu.GTP complex up to the GTP hydrolysis stage on the ribosome. This chain is Elongation factor Ts, found in Buchnera aphidicola subsp. Baizongia pistaciae (strain Bp).